Reading from the N-terminus, the 434-residue chain is Pyrichalasin H cluster regulator BC2 (434 aa).

Disordered regions lie at residues 297-321 (GSSP…CSPL) and 362-383 (HPGH…RLSH). The segment covering 298–309 (SSPSGTPESELT) has biased composition (polar residues). Residues 362 to 380 (HPGHEDHQQQQEEVKQHDR) are compositionally biased toward basic and acidic residues.

The protein resides in the nucleus. Functionally, transcription factor probably involved in regulation of gene cluster that mediates the biosynthesis of a tyrosine-derived cytochalasan acting as a fungal signal recognized by resistant rice plants and leads to avirulence in Pi33 resistant rice cultivars. The polypeptide is Pyrichalasin H cluster regulator BC2 (Pyricularia oryzae (strain 70-15 / ATCC MYA-4617 / FGSC 8958) (Rice blast fungus)).